A 138-amino-acid chain; its full sequence is Probable lactoylglutathione lyase (138 aa).

Residues Arg-5–Asn-129 form the VOC domain. His-8 provides a ligand contact to Ni(2+). Substrate is bound at residue Arg-12. Glu-59 provides a ligand contact to Ni(2+). 2 residues coordinate substrate: Asn-63 and His-77. Residues His-77 and Glu-125 each contribute to the Ni(2+) site. The active-site Proton donor/acceptor is the Glu-125.

This sequence belongs to the glyoxalase I family. Ni(2+) serves as cofactor.

The enzyme catalyses (R)-S-lactoylglutathione = methylglyoxal + glutathione. Its pathway is secondary metabolite metabolism; methylglyoxal degradation; (R)-lactate from methylglyoxal: step 1/2. In terms of biological role, catalyzes the conversion of hemimercaptal, formed from methylglyoxal and glutathione, to S-lactoylglutathione. The chain is Probable lactoylglutathione lyase (gloA) from Vibrio parahaemolyticus serotype O3:K6 (strain RIMD 2210633).